The following is a 564-amino-acid chain: Dihydroxy-acid dehydratase 2 (564 aa).

Residue Cys-59 coordinates [2Fe-2S] cluster. Mg(2+) is bound at residue Asp-91. A [2Fe-2S] cluster-binding site is contributed by Cys-132. 2 residues coordinate Mg(2+): Asp-133 and Lys-134. Residue Lys-134 is modified to N6-carboxylysine. Residue Cys-204 coordinates [2Fe-2S] cluster. Position 454 (Glu-454) interacts with Mg(2+). The Proton acceptor role is filled by Ser-480.

The protein belongs to the IlvD/Edd family. In terms of assembly, homodimer. [2Fe-2S] cluster serves as cofactor. Requires Mg(2+) as cofactor.

The catalysed reaction is (2R)-2,3-dihydroxy-3-methylbutanoate = 3-methyl-2-oxobutanoate + H2O. It catalyses the reaction (2R,3R)-2,3-dihydroxy-3-methylpentanoate = (S)-3-methyl-2-oxopentanoate + H2O. It functions in the pathway amino-acid biosynthesis; L-isoleucine biosynthesis; L-isoleucine from 2-oxobutanoate: step 3/4. Its pathway is amino-acid biosynthesis; L-valine biosynthesis; L-valine from pyruvate: step 3/4. In terms of biological role, functions in the biosynthesis of branched-chain amino acids. Catalyzes the dehydration of (2R,3R)-2,3-dihydroxy-3-methylpentanoate (2,3-dihydroxy-3-methylvalerate) into 2-oxo-3-methylpentanoate (2-oxo-3-methylvalerate) and of (2R)-2,3-dihydroxy-3-methylbutanoate (2,3-dihydroxyisovalerate) into 2-oxo-3-methylbutanoate (2-oxoisovalerate), the penultimate precursor to L-isoleucine and L-valine, respectively. The sequence is that of Dihydroxy-acid dehydratase 2 from Staphylococcus saprophyticus subsp. saprophyticus (strain ATCC 15305 / DSM 20229 / NCIMB 8711 / NCTC 7292 / S-41).